Here is a 73-residue protein sequence, read N- to C-terminus: Small ribosomal subunit protein bS18 (73 aa).

This sequence belongs to the bacterial ribosomal protein bS18 family. In terms of assembly, part of the 30S ribosomal subunit. Forms a tight heterodimer with protein bS6.

Its function is as follows. Binds as a heterodimer with protein bS6 to the central domain of the 16S rRNA, where it helps stabilize the platform of the 30S subunit. The chain is Small ribosomal subunit protein bS18 from Synechococcus sp. (strain WH7803).